The following is a 208-amino-acid chain: FMN-dependent NADH:quinone oxidoreductase 3 (208 aa).

It belongs to the azoreductase type 1 family. Homodimer. FMN is required as a cofactor.

It carries out the reaction 2 a quinone + NADH + H(+) = 2 a 1,4-benzosemiquinone + NAD(+). The catalysed reaction is N,N-dimethyl-1,4-phenylenediamine + anthranilate + 2 NAD(+) = 2-(4-dimethylaminophenyl)diazenylbenzoate + 2 NADH + 2 H(+). Quinone reductase that provides resistance to thiol-specific stress caused by electrophilic quinones. In terms of biological role, also exhibits azoreductase activity. Catalyzes the reductive cleavage of the azo bond in aromatic azo compounds to the corresponding amines. The protein is FMN-dependent NADH:quinone oxidoreductase 3 of Bacillus cereus (strain ATCC 14579 / DSM 31 / CCUG 7414 / JCM 2152 / NBRC 15305 / NCIMB 9373 / NCTC 2599 / NRRL B-3711).